Consider the following 634-residue polypeptide: Genetic interactor of prohibitins 3, mitochondrial (634 aa).

A mitochondrion-targeting transit peptide spans 1–40 (MFSRLVLLRKVSISLGRYYSSQAHPQTYIYNLLSKSKCRS). The 208-residue stretch at 171-378 (IPKLQQVLST…LFDVPGFTTN (208 aa)) folds into the CP-type G domain.

Belongs to the TRAFAC class YlqF/YawG GTPase family. GEP3 subfamily.

Its subcellular location is the mitochondrion. Functionally, may be involved in the mitochondrial lipid metabolism. This chain is Genetic interactor of prohibitins 3, mitochondrial (GEP3), found in Candida dubliniensis (strain CD36 / ATCC MYA-646 / CBS 7987 / NCPF 3949 / NRRL Y-17841) (Yeast).